We begin with the raw amino-acid sequence, 45 residues long: Photosystem II reaction center protein K (45 aa).

A propeptide spanning residues 1-8 (MTQIFLIG) is cleaved from the precursor. The chain crosses the membrane as a helical span at residues 20–40 (IVDVLPIIPVLFLLLAFVWQA).

The protein belongs to the PsbK family. PSII is composed of 1 copy each of membrane proteins PsbA, PsbB, PsbC, PsbD, PsbE, PsbF, PsbH, PsbI, PsbJ, PsbK, PsbL, PsbM, PsbT, PsbX, PsbY, PsbZ, Psb30/Ycf12, at least 3 peripheral proteins of the oxygen-evolving complex and a large number of cofactors. It forms dimeric complexes.

It is found in the plastid. It localises to the chloroplast thylakoid membrane. Its function is as follows. One of the components of the core complex of photosystem II (PSII). PSII is a light-driven water:plastoquinone oxidoreductase that uses light energy to abstract electrons from H(2)O, generating O(2) and a proton gradient subsequently used for ATP formation. It consists of a core antenna complex that captures photons, and an electron transfer chain that converts photonic excitation into a charge separation. This chain is Photosystem II reaction center protein K, found in Ostreococcus tauri.